A 129-amino-acid chain; its full sequence is UPF0325 protein ESA_03178 (129 aa).

Belongs to the UPF0325 family.

The protein is UPF0325 protein ESA_03178 of Cronobacter sakazakii (strain ATCC BAA-894) (Enterobacter sakazakii).